Reading from the N-terminus, the 614-residue chain is Membrane protein insertase YidC (614 aa).

The chain crosses the membrane as a helical span at residues 6–26 (IVLLIIFSTSLLFLWDAWIKE). Composition is skewed to polar residues over residues 34 to 48 (PAIT…STQS) and 60 to 70 (ELTSSQASPDT). Positions 34 to 87 (PAITQADSSAGSTQSRNDDSLPVPGSELTSSQASPDTNGIPASGGNGDSVTPRL) are disordered. Transmembrane regions (helical) follow at residues 380 to 400 (WGVA…PLSA), 450 to 470 (FPIL…LAAV), 484 to 504 (LSSP…MFVQ), and 524 to 544 (PVAF…YSLV). Positions 562-614 (TAPSKDTPEPPVSKQVNSSENPETTANSPADSPKQPQTPANNPRKMYKRTRKK) are disordered. Polar residues predominate over residues 575-602 (KQVNSSENPETTANSPADSPKQPQTPAN).

It belongs to the OXA1/ALB3/YidC family. Type 1 subfamily. As to quaternary structure, interacts with the Sec translocase complex via SecD. Specifically interacts with transmembrane segments of nascent integral membrane proteins during membrane integration.

It is found in the cell inner membrane. In terms of biological role, required for the insertion and/or proper folding and/or complex formation of integral membrane proteins into the membrane. Involved in integration of membrane proteins that insert both dependently and independently of the Sec translocase complex, as well as at least some lipoproteins. Aids folding of multispanning membrane proteins. This Nitrosomonas europaea (strain ATCC 19718 / CIP 103999 / KCTC 2705 / NBRC 14298) protein is Membrane protein insertase YidC.